A 375-amino-acid chain; its full sequence is F420-dependent formate dehydrogenase 2 subunit beta (375 aa).

4Fe-4S ferredoxin-type domains follow at residues 268 to 291 (PEPE…DVCP) and 320 to 349 (IRLS…AKIY). [4Fe-4S] cluster contacts are provided by C280, C283, C286, C290, C329, C332, C335, and C339.

This sequence belongs to the FrhB family. As to quaternary structure, dimer of an alpha (FdhA2) and a beta (FdhB2) subunit. [4Fe-4S] cluster is required as a cofactor. It depends on FAD as a cofactor. The cofactor is Zn(2+).

The catalysed reaction is oxidized coenzyme F420-(gamma-L-Glu)(n) + formate + 2 H(+) = reduced coenzyme F420-(gamma-L-Glu)(n) + CO2. Functionally, catalyzes the oxidation of formate to carbon dioxide, with coenzyme F420 as the electron acceptor. In vitro can also use methyl viologen as electron acceptor. The chain is F420-dependent formate dehydrogenase 2 subunit beta from Methanococcus maripaludis (strain DSM 14266 / JCM 13030 / NBRC 101832 / S2 / LL).